Consider the following 324-residue polypeptide: Ferrochelatase (324 aa).

Positions 197 and 278 each coordinate Fe cation.

The protein belongs to the ferrochelatase family.

It localises to the cytoplasm. The enzyme catalyses heme b + 2 H(+) = protoporphyrin IX + Fe(2+). It participates in porphyrin-containing compound metabolism; protoheme biosynthesis; protoheme from protoporphyrin-IX: step 1/1. In terms of biological role, catalyzes the ferrous insertion into protoporphyrin IX. The chain is Ferrochelatase from Aeromonas hydrophila subsp. hydrophila (strain ATCC 7966 / DSM 30187 / BCRC 13018 / CCUG 14551 / JCM 1027 / KCTC 2358 / NCIMB 9240 / NCTC 8049).